The chain runs to 431 residues: Nuclear receptor subfamily 1 group I member 2 (431 aa).

2 NR C4-type zinc fingers span residues 38–58 (CRVCGDKANGYHFNVMTCEGC) and 74–99 (CPFRKGTCEITRKTRRQCQACRLRKC). Positions 38–104 (CRVCGDKANG…RLRKCLESGM (67 aa)) form a DNA-binding region, nuclear receptor. The short motif at 63-89 (RRAMKRNVRLRCPFRKGTCEITRKTRR) is the Bipartite nuclear localization signal element. Residues 105–142 (KKEMIMSDAAVEQRRALIKRKKREKIEAPPPGGQGLTE) form a hinge region. An NR LBD domain is found at 143–430 (EQQALIQELM…LMQELFSSTD (288 aa)). Hyperforin contacts are provided by residues Ser244 and 282-285 (ILRF).

It belongs to the nuclear hormone receptor family. NR1 subfamily. In terms of assembly, heterodimer with RXRA. Interacts with NCOA1. Interacts (via domain NR LBD) with CRY1 and CRY2 in a ligand-dependent manner.

It localises to the nucleus. Its function is as follows. Nuclear receptor that binds and is activated by a variety of endogenous and xenobiotic compounds. Transcription factor that activates the transcription of multiple genes involved in the metabolism and secretion of potentially harmful xenobiotics, endogenous compounds and drugs. Response to specific ligands is species-specific, due to differences in the ligand-binding domain. Activated by naturally occurring steroids, such as pregnenolone and progesterone. Binds to a response element in the promoters of the CYP3A4 and ABCB1/MDR1 genes. The protein is Nuclear receptor subfamily 1 group I member 2 (Nr1i2) of Rattus norvegicus (Rat).